The primary structure comprises 69 residues: Conotoxin Lp3.1 (69 aa).

Residues 1–20 (MLKMGVLLFIFLVLFPLTTL) form the signal peptide. Residues 21–54 (ELDTDRPVERHAAIKQDLKPQERRGIRLHAPRDE) constitute a propeptide that is removed on maturation. 3 cysteine pairs are disulfide-bonded: C55–C67, C56–C65, and C61–C68.

This sequence belongs to the conotoxin M superfamily. In terms of tissue distribution, expressed by the venom duct.

The protein resides in the secreted. The chain is Conotoxin Lp3.1 from Conus leopardus (Leopard cone).